Consider the following 200-residue polypeptide: NADH-quinone oxidoreductase subunit C (200 aa).

Belongs to the complex I 30 kDa subunit family. As to quaternary structure, NDH-1 is composed of 14 different subunits. Subunits NuoB, C, D, E, F, and G constitute the peripheral sector of the complex.

Its subcellular location is the cell inner membrane. It catalyses the reaction a quinone + NADH + 5 H(+)(in) = a quinol + NAD(+) + 4 H(+)(out). Its function is as follows. NDH-1 shuttles electrons from NADH, via FMN and iron-sulfur (Fe-S) centers, to quinones in the respiratory chain. The immediate electron acceptor for the enzyme in this species is believed to be ubiquinone. Couples the redox reaction to proton translocation (for every two electrons transferred, four hydrogen ions are translocated across the cytoplasmic membrane), and thus conserves the redox energy in a proton gradient. The polypeptide is NADH-quinone oxidoreductase subunit C (Ralstonia pickettii (strain 12J)).